Reading from the N-terminus, the 312-residue chain is Ribosomal protein L11 methyltransferase (312 aa).

Residues Thr-160, Gly-181, Asp-203, and Asn-246 each contribute to the S-adenosyl-L-methionine site.

It belongs to the methyltransferase superfamily. PrmA family.

The protein localises to the cytoplasm. It carries out the reaction L-lysyl-[protein] + 3 S-adenosyl-L-methionine = N(6),N(6),N(6)-trimethyl-L-lysyl-[protein] + 3 S-adenosyl-L-homocysteine + 3 H(+). In terms of biological role, methylates ribosomal protein L11. This is Ribosomal protein L11 methyltransferase from Staphylococcus saprophyticus subsp. saprophyticus (strain ATCC 15305 / DSM 20229 / NCIMB 8711 / NCTC 7292 / S-41).